The primary structure comprises 246 residues: N-alpha-acetyltransferase 11 (246 aa).

The interaction with NAA15 stretch occupies residues M1–A58. One can recognise an N-acetyltransferase domain in the interval M1 to A152. Residues E175–S246 form a disordered region. The span at S230–S246 shows a compositional bias: polar residues.

The protein belongs to the acetyltransferase family. ARD1 subfamily. Component of the N-terminal acetyltransferase A (NatA) complex composed of NAA11 and NAA15. Interacts with HIF1A.

The protein localises to the cytoplasm. It localises to the nucleus. The catalysed reaction is N-terminal glycyl-[protein] + acetyl-CoA = N-terminal N(alpha)-acetylglycyl-[protein] + CoA + H(+). The enzyme catalyses N-terminal L-alanyl-[protein] + acetyl-CoA = N-terminal N(alpha)-acetyl-L-alanyl-[protein] + CoA + H(+). It catalyses the reaction N-terminal L-seryl-[protein] + acetyl-CoA = N-terminal N(alpha)-acetyl-L-seryl-[protein] + CoA + H(+). It carries out the reaction N-terminal L-valyl-[protein] + acetyl-CoA = N-terminal N(alpha)-acetyl-L-valyl-[protein] + CoA + H(+). The catalysed reaction is N-terminal L-cysteinyl-[protein] + acetyl-CoA = N-terminal N(alpha)-acetyl-L-cysteinyl-[protein] + CoA + H(+). The enzyme catalyses N-terminal L-threonyl-[protein] + acetyl-CoA = N-terminal N(alpha)-acetyl-L-threonyl-[protein] + CoA + H(+). Functionally, displays alpha (N-terminal) acetyltransferase activity. Proposed alternative catalytic subunit of the N-terminal acetyltransferase A (NatA) complex. This chain is N-alpha-acetyltransferase 11 (Naa11), found in Rattus norvegicus (Rat).